A 145-amino-acid polypeptide reads, in one-letter code: UPF0201 protein Saci_1285 (145 aa).

Belongs to the UPF0201 family.

In Sulfolobus acidocaldarius (strain ATCC 33909 / DSM 639 / JCM 8929 / NBRC 15157 / NCIMB 11770), this protein is UPF0201 protein Saci_1285.